The primary structure comprises 488 residues: Glutamate--tRNA ligase (488 aa).

Residues 16 to 26 carry the 'HIGH' region motif; the sequence is PSPTGEPHVGT. A 'KMSKS' region motif is present at residues 257–261; sequence KLSKR. ATP is bound at residue Lys260.

The protein belongs to the class-I aminoacyl-tRNA synthetase family. Glutamate--tRNA ligase type 1 subfamily. As to quaternary structure, monomer.

The protein localises to the cytoplasm. The catalysed reaction is tRNA(Glu) + L-glutamate + ATP = L-glutamyl-tRNA(Glu) + AMP + diphosphate. Functionally, catalyzes the attachment of glutamate to tRNA(Glu) in a two-step reaction: glutamate is first activated by ATP to form Glu-AMP and then transferred to the acceptor end of tRNA(Glu). This is Glutamate--tRNA ligase from Rhizobium johnstonii (strain DSM 114642 / LMG 32736 / 3841) (Rhizobium leguminosarum bv. viciae).